The primary structure comprises 183 residues: Transmembrane protein 252 (183 aa).

Helical transmembrane passes span 8–28 (ILCA…GFFI) and 39–59 (LVVA…GIFW).

Its subcellular location is the membrane. The chain is Transmembrane protein 252 (Tmem252) from Mus musculus (Mouse).